The primary structure comprises 135 residues: RxLR effector protein Avr10 (135 aa).

The N-terminal stretch at 1–19 is a signal peptide; it reads MRLSFIIFAISLLAGGSGA. Residues 34 to 43 are compositionally biased toward polar residues; the sequence is GTNQGASTGK. Positions 34–64 are disordered; the sequence is GTNQGASTGKRSLRYDNNAERAGEEDDEERA. The short motif at 44–63 is the RxLR-dEER element; that stretch reads RSLRYDNNAERAGEEDDEER. A compositionally biased stretch (basic and acidic residues) spans 46–55; it reads LRYDNNAERA.

The protein belongs to the RxLR effector family.

The protein localises to the secreted. It is found in the host nucleus. Its subcellular location is the host cytoplasm. Its function is as follows. Secreted effector that acts as an elicitor of hypersensitive response (HR) specifically on plants carrying defense protein R10. Enhances P.infestans colonization of Nicotiana benthamiana leaves. The protein is RxLR effector protein Avr10 of Phytophthora infestans (strain T30-4) (Potato late blight agent).